Reading from the N-terminus, the 175-residue chain is Inorganic pyrophosphatase (175 aa).

Lys30, Arg44, and Tyr56 together coordinate substrate. Mg(2+) is bound by residues Asp66, Asp71, and Asp103. Tyr142 lines the substrate pocket.

Belongs to the PPase family. Homohexamer. It depends on Mg(2+) as a cofactor.

Its subcellular location is the cytoplasm. It carries out the reaction diphosphate + H2O = 2 phosphate + H(+). Its function is as follows. Catalyzes the hydrolysis of inorganic pyrophosphate (PPi) forming two phosphate ions. This is Inorganic pyrophosphatase from Yersinia pestis.